The sequence spans 273 residues: Undecaprenyl-diphosphatase (273 aa).

A run of 7 helical transmembrane segments spans residues 13–35, 45–62, 82–102, 108–128, 186–206, 219–239, and 250–270; these read GLVEGFTEFLPISSTGHLIVFGN, VFEITIQLGAVLAVVFEY, FVLNLAIAFIPAAVMGLLFGK, LFNPLSVAVMLVLGGFFILWV, TEFSFFLAVPMMVAATAYDVL, LILIGFVAAFVSGLVAVKALL, and FAYYRIVFGIAIIILWLSGWI.

It belongs to the UppP family.

The protein localises to the cell inner membrane. The enzyme catalyses di-trans,octa-cis-undecaprenyl diphosphate + H2O = di-trans,octa-cis-undecaprenyl phosphate + phosphate + H(+). Its function is as follows. Catalyzes the dephosphorylation of undecaprenyl diphosphate (UPP). Confers resistance to bacitracin. This is Undecaprenyl-diphosphatase from Neisseria meningitidis serogroup A / serotype 4A (strain DSM 15465 / Z2491).